A 93-amino-acid polypeptide reads, in one-letter code: Ubiquinol-cytochrome-c reductase complex assembly factor 3 (93 aa).

Residues 1-7 (MDSLRKM) lie on the Mitochondrial matrix side of the membrane. A helical membrane pass occupies residues 8-28 (LISVAMLGAGAGVGYALLVIV). A mediates lipid-binding region spans residues 23–80 (ALLVIVTPGERRKQEMLKEMPLQDPRSREEAARTQQLLLATLQEAATTQENVAWRKNW). Residues 29–93 (TPGERRKQEM…GEGGAGGRSP (65 aa)) lie on the Mitochondrial intermembrane side of the membrane.

It belongs to the UQCC3 family. As to quaternary structure, associates with the ubiquinol-cytochrome c reductase complex (mitochondrial respiratory chain complex III or cytochrome b-c1 complex). Interacts with UQCC1. Forms a complex, named COMC, composed of UQCC1, UQCC2; UQCC3 and UQCC4; mediates MT-CYB hemylation and association with the first nuclear-encoded complex III subunit UQCRQ. Post-translationally, probably cleaved by OMA1 under mitochondrial stress conditions.

The protein localises to the mitochondrion inner membrane. Required for the assembly of the ubiquinol-cytochrome c reductase complex (mitochondrial respiratory chain complex III or cytochrome b-c1 complex), mediating cytochrome b recruitment and probably stabilization within the complex. Thereby, plays an important role in ATP production by mitochondria. Cardiolipin-binding protein, it may also control the cardiolipin composition of mitochondria membranes and their morphology. The chain is Ubiquinol-cytochrome-c reductase complex assembly factor 3 from Homo sapiens (Human).